The chain runs to 139 residues: Large ribosomal subunit protein uL16 (139 aa).

Over residues 1–17 (MLMPKRVKYRKTQRGRM) the composition is skewed to basic residues. Positions 1–24 (MLMPKRVKYRKTQRGRMKGNSGRG) are disordered.

The protein belongs to the universal ribosomal protein uL16 family. As to quaternary structure, part of the 50S ribosomal subunit.

Functionally, binds 23S rRNA and is also seen to make contacts with the A and possibly P site tRNAs. The polypeptide is Large ribosomal subunit protein uL16 (Pelodictyon phaeoclathratiforme (strain DSM 5477 / BU-1)).